Here is a 233-residue protein sequence, read N- to C-terminus: Bcl-2-like protein 1 (233 aa).

Positions 4–24 (SNRELVVDFLSYKLSQKGYSW) match the BH4 motif. The tract at residues 27–73 (FSDVEENRTEAPEETEAERETPSAINGNPSWHLADSPAVNGATGHSS) is disordered. S49 carries the post-translational modification Phosphoserine; by PLK3. S62 bears the Phosphoserine; by CDK1 mark. Residues 86 to 100 (VKQALREAGDEFELR) carry the BH3 motif. Positions 129–148 (ELFRDGVNWGRIVAFFSFGG) match the BH1 motif. The BH2 signature appears at 180-195 (PWIQENGGWDTFVDLY). Residues 210–226 (FNRWFLTGMTVAGVVLL) traverse the membrane as a helical segment.

This sequence belongs to the Bcl-2 family. Homodimer. Interacts with BAD. Interacts with PGAM5. Interacts with HEBP2. Interacts with p53/TP53 and BBC3; interaction with BBC3 disrupts the interaction with p53/TP53. Interacts with ATP5F1A and ATP5F1B; the interactions mediate the association of isoform Bcl-X(L) with the mitochondrial membrane ATP synthase F(1)F(0) ATP synthase. Interacts with VDAC1. Interacts with BCL2L11 (via BH3). Interacts with RNF183. Interacts with GIMAP3/IAN4 and GIMAP5/IAN5. Interacts with GIMAP5 and HSPA8/HSC70; the interaction between HSPA8 and BCL2L1 is impaired in the absence of GIMAP5. Interacts with isoform 4 of CLU; this interaction releases and activates BAX and promotes cell death. In terms of assembly, forms heterodimers with BAX, BAK or BCL2; heterodimerization with BAX does not seem to be required for anti-apoptotic activity. Interacts with isoform 1 of SIVA1; the interaction inhibits the anti-apoptotic activity. Interacts with IKZF3. Interacts with RTL10/BOP. Interacts with DNM1L and CLTA; DNM1L and BCL2L1 isoform BCL-X(L) may form a complex in synaptic vesicles that also contains clathrin and MFF. Interacts (via the loop between motifs BH4 and BH3) with NLRP1 (via LRR repeats), but not with NLRP2, NLRP3, NLRP4, PYCARD, nor MEFV. Interacts with BECN1. In terms of processing, proteolytically cleaved by caspases during apoptosis. The cleaved protein, lacking the BH4 motif, has pro-apoptotic activity. Post-translationally, phosphorylated on Ser-62 by CDK1. This phosphorylation is partial in normal mitotic cells, but complete in G2-arrested cells upon DNA-damage, thus promoting subsequent apoptosis probably by triggering caspases-mediated proteolysis. Phosphorylated by PLK3, leading to regulate the G2 checkpoint and progression to cytokinesis during mitosis. Phosphorylation at Ser-49 appears during the S phase and G2, disappears rapidly in early mitosis during prometaphase, metaphase and early anaphase, and re-appears during telophase and cytokinesis. Ubiquitinated by RNF183 during prolonged ER stress, leading to degradation by the proteosome. In terms of tissue distribution, widely expressed, with highest levels in the brain, thymus, bone marrow, and kidney. Bcl-X(L) and Bcl-X(delta-TM) expression is enhanced in B- and T-lymphocytes that have been activated.

It localises to the mitochondrion membrane. The protein resides in the nucleus membrane. Its subcellular location is the cytoplasm. The protein localises to the cytoskeleton. It is found in the microtubule organizing center. It localises to the centrosome. The protein resides in the mitochondrion inner membrane. Its subcellular location is the mitochondrion outer membrane. The protein localises to the mitochondrion matrix. It is found in the cytoplasmic vesicle. It localises to the secretory vesicle. The protein resides in the synaptic vesicle membrane. Its subcellular location is the cytosol. Functionally, potent inhibitor of cell death. Inhibits activation of caspases. Appears to regulate cell death by blocking the voltage-dependent anion channel (VDAC) by binding to it and preventing the release of the caspase activator, CYC1, from the mitochondrial membrane. Also acts as a regulator of G2 checkpoint and progression to cytokinesis during mitosis. Isoform Bcl-X(L) also regulates presynaptic plasticity, including neurotransmitter release and recovery, number of axonal mitochondria as well as size and number of synaptic vesicle clusters. During synaptic stimulation, increases ATP availability from mitochondria through regulation of mitochondrial membrane ATP synthase F(1)F(0) activity and regulates endocytic vesicle retrieval in hippocampal neurons through association with DMN1L and stimulation of its GTPase activity in synaptic vesicles. May attenuate inflammation impairing NLRP1-inflammasome activation, hence CASP1 activation and IL1B release. Its function is as follows. Isoform Bcl-X(S) promotes apoptosis. This Mus musculus (Mouse) protein is Bcl-2-like protein 1 (Bcl2l1).